Here is a 508-residue protein sequence, read N- to C-terminus: Protein phosphatase PP2A regulatory subunit B (508 aa).

6 WD repeats span residues 19–58 (TEADIISTVEFDHTGDFLATGDKGGRVVLFERNQSKKKQS), 81–122 (EIEE…IKLV), 166–204 (AHAYHINSISVNSDQETYLSADDLRINLWNLGIADQSFN), 215–255 (ELTE…LCDS), 274–312 (EITSSISDVKFSHDGRYIASRDYMTVKIWDLAMENKPIK), and 329–370 (ENDA…GNDD). Residues 369 to 466 (DDKPKFKSAF…MRRRMTSGVG (98 aa)) form a disordered region. Acidic residues predominate over residues 396 to 418 (DDDDDDDDDDDDEEADDEFDEEV). Over residues 447–461 (FKSKKSGQHPMRRRM) the composition is skewed to basic residues. Residues 477–507 (DFKKSILHLSWHPRENSVAIAATNNLYIFST) form a WD 7 repeat.

Belongs to the phosphatase 2A regulatory subunit B family. In terms of assembly, PP2A exists in several trimeric forms, all of which consist of a core composed of a catalytic subunit associated with a 65 kDa (PR65) (Subunit A) and a 55 kDa (PR55) (Subunit B) regulatory subunit.

Phosphatase 2A affects a variety of biological processes in the cell such as transcription, cell cycle progression and cellular morphogenesis, and provides an initial identification of critical substrates for this phosphatase. The regulatory subunit may direct the catalytic subunit to distinct, albeit overlapping, subsets of substrates. The sequence is that of Protein phosphatase PP2A regulatory subunit B (CDC55) from Candida tropicalis (Yeast).